We begin with the raw amino-acid sequence, 428 residues long: Histidinol dehydrogenase (428 aa).

Residues Tyr-127, Gln-185, and Asn-208 each contribute to the NAD(+) site. Residues Ser-232, Gln-254, and His-257 each coordinate substrate. 2 residues coordinate Zn(2+): Gln-254 and His-257. Active-site proton acceptor residues include Glu-321 and His-322. Residues His-322, Asp-355, Glu-409, and His-414 each contribute to the substrate site. Asp-355 contacts Zn(2+). His-414 serves as a coordination point for Zn(2+).

This sequence belongs to the histidinol dehydrogenase family. Zn(2+) serves as cofactor.

The catalysed reaction is L-histidinol + 2 NAD(+) + H2O = L-histidine + 2 NADH + 3 H(+). Its pathway is amino-acid biosynthesis; L-histidine biosynthesis; L-histidine from 5-phospho-alpha-D-ribose 1-diphosphate: step 9/9. Its function is as follows. Catalyzes the sequential NAD-dependent oxidations of L-histidinol to L-histidinaldehyde and then to L-histidine. This Pasteurella multocida (strain Pm70) protein is Histidinol dehydrogenase.